The chain runs to 173 residues: Bifunctional protein PyrR (173 aa).

A PRPP-binding motif is present at residues 93–105 (IILIDDVLYTGRT).

Belongs to the purine/pyrimidine phosphoribosyltransferase family. PyrR subfamily. Homodimer and homohexamer; in equilibrium.

The catalysed reaction is UMP + diphosphate = 5-phospho-alpha-D-ribose 1-diphosphate + uracil. Functionally, regulates transcriptional attenuation of the pyrimidine nucleotide (pyr) operon by binding in a uridine-dependent manner to specific sites on pyr mRNA. This disrupts an antiterminator hairpin in the RNA and favors formation of a downstream transcription terminator, leading to a reduced expression of downstream genes. Its function is as follows. Also displays a weak uracil phosphoribosyltransferase activity which is not physiologically significant. The protein is Bifunctional protein PyrR of Streptococcus agalactiae serotype Ia (strain ATCC 27591 / A909 / CDC SS700).